The sequence spans 204 residues: Putative AgrB-like protein (204 aa).

4 helical membrane passes run Tyr-52 to Leu-74, Leu-87 to Ile-107, Asn-111 to Ala-131, and Leu-156 to Val-176.

This sequence belongs to the AgrB family.

The protein resides in the cell membrane. Functionally, may be involved in the proteolytic processing of a quorum sensing system signal molecule precursor. The chain is Putative AgrB-like protein from Listeria monocytogenes serotype 4b (strain CLIP80459).